Reading from the N-terminus, the 88-residue chain is UPF0335 protein WRi_003770 (88 aa).

This sequence belongs to the UPF0335 family.

In Wolbachia sp. subsp. Drosophila simulans (strain wRi), this protein is UPF0335 protein WRi_003770.